A 172-amino-acid chain; its full sequence is Shikimate kinase (172 aa).

11 to 16 contacts ATP; the sequence is GCGKST. Ser-15 serves as a coordination point for Mg(2+). Substrate-binding residues include Asp-33, Arg-57, and Gly-80. Arg-120 is a binding site for ATP. Arg-142 is a binding site for substrate. Arg-158 lines the ATP pocket.

The protein belongs to the shikimate kinase family. Monomer. It depends on Mg(2+) as a cofactor.

The protein localises to the cytoplasm. It catalyses the reaction shikimate + ATP = 3-phosphoshikimate + ADP + H(+). The protein operates within metabolic intermediate biosynthesis; chorismate biosynthesis; chorismate from D-erythrose 4-phosphate and phosphoenolpyruvate: step 5/7. Catalyzes the specific phosphorylation of the 3-hydroxyl group of shikimic acid using ATP as a cosubstrate. This Flavobacterium johnsoniae (strain ATCC 17061 / DSM 2064 / JCM 8514 / BCRC 14874 / CCUG 350202 / NBRC 14942 / NCIMB 11054 / UW101) (Cytophaga johnsonae) protein is Shikimate kinase.